Reading from the N-terminus, the 274-residue chain is Penicillin-insensitive murein endopeptidase (274 aa).

The first 19 residues, methionine 1–alanine 19, serve as a signal peptide directing secretion. Cystine bridges form between cysteine 44-cysteine 265, cysteine 187-cysteine 235, and cysteine 216-cysteine 223. Positions 110, 113, 120, 147, 150, and 211 each coordinate Zn(2+). A disordered region spans residues proline 227 to isoleucine 274.

The protein belongs to the peptidase M74 family. As to quaternary structure, dimer. The cofactor is Zn(2+).

The protein localises to the periplasm. Functionally, murein endopeptidase that cleaves the D-alanyl-meso-2,6-diamino-pimelyl amide bond that connects peptidoglycan strands. Likely plays a role in the removal of murein from the sacculus. This chain is Penicillin-insensitive murein endopeptidase, found in Escherichia coli (strain ATCC 8739 / DSM 1576 / NBRC 3972 / NCIMB 8545 / WDCM 00012 / Crooks).